The chain runs to 247 residues: DNA repair protein RecO (247 aa).

The protein belongs to the RecO family.

Its function is as follows. Involved in DNA repair and RecF pathway recombination. The chain is DNA repair protein RecO from Brucella abortus (strain 2308).